Consider the following 97-residue polypeptide: Aspartyl/glutamyl-tRNA(Asn/Gln) amidotransferase subunit C (97 aa).

The protein belongs to the GatC family. Heterotrimer of A, B and C subunits.

It carries out the reaction L-glutamyl-tRNA(Gln) + L-glutamine + ATP + H2O = L-glutaminyl-tRNA(Gln) + L-glutamate + ADP + phosphate + H(+). The catalysed reaction is L-aspartyl-tRNA(Asn) + L-glutamine + ATP + H2O = L-asparaginyl-tRNA(Asn) + L-glutamate + ADP + phosphate + 2 H(+). Its function is as follows. Allows the formation of correctly charged Asn-tRNA(Asn) or Gln-tRNA(Gln) through the transamidation of misacylated Asp-tRNA(Asn) or Glu-tRNA(Gln) in organisms which lack either or both of asparaginyl-tRNA or glutaminyl-tRNA synthetases. The reaction takes place in the presence of glutamine and ATP through an activated phospho-Asp-tRNA(Asn) or phospho-Glu-tRNA(Gln). The chain is Aspartyl/glutamyl-tRNA(Asn/Gln) amidotransferase subunit C from Sulfolobus acidocaldarius (strain ATCC 33909 / DSM 639 / JCM 8929 / NBRC 15157 / NCIMB 11770).